The following is a 270-amino-acid chain: Chymotrypsin-like elastase family member 3A (270 aa).

The segment at residues 1 to 15 (MMLRLLSSLLLVAVA) is a signal peptide (or 16). Residues 16 to 28 (SGYGPPSSHSSSR) constitute a propeptide, activation peptide. The 240-residue stretch at 29–268 (VVHGEDAVPY…FIDWIEETIA (240 aa)) folds into the Peptidase S1 domain. Cys-58 and Cys-74 form a disulfide bridge. His-73 acts as the Charge relay system in catalysis. N-linked (GlcNAc...) asparagine glycosylation occurs at Asn-114. A disulfide bond links Cys-117 and Cys-120. Asp-123 acts as the Charge relay system in catalysis. Intrachain disulfides connect Cys-157/Cys-223, Cys-188/Cys-204, and Cys-213/Cys-244. Ser-217 (charge relay system) is an active-site residue.

The protein belongs to the peptidase S1 family. Elastase subfamily.

The enzyme catalyses Preferential cleavage: Ala-|-Xaa. Does not hydrolyze elastin.. Functionally, efficient protease with alanine specificity but only little elastolytic activity. The polypeptide is Chymotrypsin-like elastase family member 3A (CELA3A) (Homo sapiens (Human)).